The chain runs to 639 residues: RNA polymerase II elongation factor ELL2 (639 aa).

Disordered regions lie at residues Asp-175 to Gln-203, Leu-291 to Ile-326, Pro-378 to Gln-416, and Pro-439 to Thr-513. Polar residues predominate over residues Leu-291–Gln-317. Positions Pro-378–Pro-401 are enriched in low complexity. Residues Ser-457–Lys-469 are compositionally biased toward basic residues. Residues Glu-470–Ile-479 show a composition bias toward basic and acidic residues. The segment covering Glu-480 to Gln-490 has biased composition (acidic residues). Ser-501 and Ser-579 each carry phosphoserine. The OCEL domain maps to Pro-525–Ala-635.

Belongs to the ELL/occludin family. Component of the super elongation complex (SEC), at least composed of EAF1, EAF2, CDK9, MLLT3/AF9, AFF (AFF1 or AFF4), the P-TEFb complex and ELL (ELL, ELL2 or ELL3). Component of the little elongation complex (LEC), at least composed of ELL (ELL, ELL2 or ELL3), ZC3H8, ICE1 and ICE2. Interacts with AFF4; the interaction is direct and leads to stabilize ELL2 and prevent ELL2 ubiquitination. Interacts with EAF1 and EAF2. In terms of processing, ubiquitinated by SIAH1, leading to its degradation by the proteasome. Interaction with AFF4 stabilizes ELL2 and prevents ELL2 ubiquitination.

Its subcellular location is the nucleus. Its function is as follows. Elongation factor component of the super elongation complex (SEC), a complex required to increase the catalytic rate of RNA polymerase II transcription by suppressing transient pausing by the polymerase at multiple sites along the DNA. Component of the little elongation complex (LEC), a complex required to regulate small nuclear RNA (snRNA) gene transcription by RNA polymerase II and III. Plays a role in immunoglobulin secretion in plasma cells: directs efficient alternative mRNA processing, influencing both proximal poly(A) site choice and exon skipping, as well as immunoglobulin heavy chain (IgH) alternative processing. Probably acts by regulating histone modifications accompanying transition from membrane-specific to secretory IgH mRNA expression. The protein is RNA polymerase II elongation factor ELL2 (Ell2) of Mus musculus (Mouse).